Consider the following 100-residue polypeptide: Small ribosomal subunit protein uS14c (100 aa).

The span at 1 to 10 shows a compositional bias: basic and acidic residues; that stretch reads MARKGLIERE. Positions 1–29 are disordered; that stretch reads MARKGLIEREKKRKKLEQKYHSIRGSSKK.

It belongs to the universal ribosomal protein uS14 family. In terms of assembly, part of the 30S ribosomal subunit.

It is found in the plastid. Its subcellular location is the chloroplast. Its function is as follows. Binds 16S rRNA, required for the assembly of 30S particles. This Acorus calamus (Sweet flag) protein is Small ribosomal subunit protein uS14c.